A 1322-amino-acid polypeptide reads, in one-letter code: Protein fantom (1322 aa).

The first 22 residues, 1–22 (MVSARYPIEKWSRPQLEDHFHN), serve as a signal peptide directing secretion. A coiled-coil region spans residues 15–89 (QLEDHFHNVV…MKLKAAKQQL (75 aa)). Positions 108–119 (RSTFRQPPSTFR) are enriched in polar residues. 3 disordered regions span residues 108-151 (RSTF…GEKL), 189-275 (KSSV…PDQT), and 392-418 (RIEE…SQSE). Residues 195–217 (SSPPTRLSTSSSSKSSSSNNNND) show a composition bias toward low complexity. Acidic residues predominate over residues 224-234 (ELEEMSEMSDD). Residues 274–362 (QTEKVLLDKL…EDQKKFEAMR (89 aa)) are a coiled coil. The stretch at 456–538 (ASENSLARWQ…FMLEEQIRTI (83 aa)) forms a coiled coil. Disordered regions lie at residues 891-1094 (AELH…KPRN) and 1121-1149 (TDPL…PVPL). The segment covering 918–927 (TDSSDTSFSH) has biased composition (low complexity). Residues 956 to 975 (SDGEEEADRIVFDDDDDEIE) show a composition bias toward acidic residues. Residues 984-996 (RDPEPLEVPERQV) show a composition bias toward basic and acidic residues. The span at 1015-1029 (NGTNESKESTPVTQR) shows a compositional bias: polar residues. Residues 1042-1067 (PELEPESGPEPEPVVESEPNEVAETE) are compositionally biased toward acidic residues. The span at 1068-1080 (EDRKRELKTEELK) shows a compositional bias: basic and acidic residues. Positions 1127–1139 (SVPPSESSSTSSP) are enriched in low complexity.

The protein belongs to the RPGRIP1 family. In terms of tissue distribution, expressed at the transition zone at the base of cilia. Expressed in ciliated sensory neurons, including the amphid neurons in the head.

The protein resides in the cell projection. It localises to the cilium. Thought to have an important role in cilia formation and cilia-mediated chemosensation. Involved in the docking of other MKS/MKSR proteins localized to the transition zone of the cilia. The sequence is that of Protein fantom (mks-5) from Caenorhabditis elegans.